The sequence spans 197 residues: Peptide deformylase (197 aa).

Fe cation contacts are provided by cysteine 106 and histidine 148. The active site involves glutamate 149. Fe cation is bound at residue histidine 152.

The protein belongs to the polypeptide deformylase family. Fe(2+) is required as a cofactor.

It carries out the reaction N-terminal N-formyl-L-methionyl-[peptide] + H2O = N-terminal L-methionyl-[peptide] + formate. In terms of biological role, removes the formyl group from the N-terminal Met of newly synthesized proteins. Requires at least a dipeptide for an efficient rate of reaction. N-terminal L-methionine is a prerequisite for activity but the enzyme has broad specificity at other positions. This Mycobacterium marinum (strain ATCC BAA-535 / M) protein is Peptide deformylase.